A 156-amino-acid polypeptide reads, in one-letter code: Small ribosomal subunit protein uS7c (156 aa).

This sequence belongs to the universal ribosomal protein uS7 family. In terms of assembly, part of the 30S ribosomal subunit.

It is found in the plastid. Its subcellular location is the chloroplast. In terms of biological role, one of the primary rRNA binding proteins, it binds directly to 16S rRNA where it nucleates assembly of the head domain of the 30S subunit. The polypeptide is Small ribosomal subunit protein uS7c (rps7) (Cyanidium caldarium (Red alga)).